A 431-amino-acid chain; its full sequence is Na(+)-translocating NADH-quinone reductase subunit F (431 aa).

The helical transmembrane segment at 10 to 30 (IFVASAAFCSLGLILVAVILL) threads the bilayer. The 2Fe-2S ferredoxin-type domain occupies 41-133 (CKLKINNDDS…DLCLEVEERY (93 aa)). [2Fe-2S] cluster is bound by residues C76, C82, C85, and C117. An FAD-binding FR-type domain is found at 136–286 (ASSWEGTVVS…SGPYGESFMK (151 aa)).

It belongs to the NqrF family. Composed of six subunits; NqrA, NqrB, NqrC, NqrD, NqrE and NqrF. [2Fe-2S] cluster serves as cofactor. FAD is required as a cofactor.

It localises to the cell inner membrane. It carries out the reaction a ubiquinone + n Na(+)(in) + NADH + H(+) = a ubiquinol + n Na(+)(out) + NAD(+). Functionally, NQR complex catalyzes the reduction of ubiquinone-1 to ubiquinol by two successive reactions, coupled with the transport of Na(+) ions from the cytoplasm to the periplasm. The first step is catalyzed by NqrF, which accepts electrons from NADH and reduces ubiquinone-1 to ubisemiquinone by a one-electron transfer pathway. This chain is Na(+)-translocating NADH-quinone reductase subunit F, found in Chlamydia trachomatis serovar A (strain ATCC VR-571B / DSM 19440 / HAR-13).